Reading from the N-terminus, the 185-residue chain is Ribosome-recycling factor (185 aa).

This sequence belongs to the RRF family.

It localises to the cytoplasm. Its function is as follows. Responsible for the release of ribosomes from messenger RNA at the termination of protein biosynthesis. May increase the efficiency of translation by recycling ribosomes from one round of translation to another. This chain is Ribosome-recycling factor, found in Vibrio cholerae serotype O1 (strain ATCC 39541 / Classical Ogawa 395 / O395).